Consider the following 263-residue polypeptide: Ribosomal RNA small subunit methyltransferase A (263 aa).

S-adenosyl-L-methionine is bound by residues N20, L22, G47, E68, D90, and N111.

Belongs to the class I-like SAM-binding methyltransferase superfamily. rRNA adenine N(6)-methyltransferase family. RsmA subfamily.

The protein localises to the cytoplasm. The enzyme catalyses adenosine(1518)/adenosine(1519) in 16S rRNA + 4 S-adenosyl-L-methionine = N(6)-dimethyladenosine(1518)/N(6)-dimethyladenosine(1519) in 16S rRNA + 4 S-adenosyl-L-homocysteine + 4 H(+). Specifically dimethylates two adjacent adenosines (A1518 and A1519) in the loop of a conserved hairpin near the 3'-end of 16S rRNA in the 30S particle. May play a critical role in biogenesis of 30S subunits. The chain is Ribosomal RNA small subunit methyltransferase A from Chlorobium chlorochromatii (strain CaD3).